The chain runs to 957 residues: Serine-aspartate repeat-containing protein C (957 aa).

A signal peptide spans 1 to 50; that stretch reads MNNKKTVTNRKGMIPNRLNKFSIRKYSVGTASILVGTTLIFGLSGHEAKA. Positions 51–166 are disordered; it reads AEHTNGELNQ…TPKTTTIKPR (116 aa). The ligand binding A region stretch occupies residues 51 to 495; sequence AEHTNGELNQ…GSSTANGDQK (445 aa). A compositionally biased stretch (polar residues) spans 56 to 71; sequence GELNQSKNETTAPSEN. A compositionally biased stretch (basic and acidic residues) spans 72-83; sequence KTTEKVDSRQLK. Polar residues predominate over residues 84 to 114; that stretch reads DNTQTATADQPKVTMSDSATVKETSSNMQSP. Residues 115–132 show a composition bias toward low complexity; sequence QNATASQSTTQTSNVTTN. Residues 133-164 show a composition bias toward polar residues; it reads DKSSTTYSNETDKSNLTQAKDVSATPKTTTIK. 2 consecutive CNA-B domains span residues 496–606 and 607–717; these read KYNL…YKTP and KYSL…EEET. The disordered stretch occupies residues 678 to 937; sequence TQTGTNTTED…NNSNNGTLFG (260 aa). 2 stretches are compositionally biased toward acidic residues: residues 685 to 695 and 712 to 896; these read TEDDKDADGGE and YYEE…DSDS. The LPXTG sorting signal motif lies at 920–924; the sequence is LPETG. Low complexity predominate over residues 922-937; the sequence is ETGSENNNSNNGTLFG. Position 923 is a pentaglycyl murein peptidoglycan amidated threonine (Thr-923). A propeptide spans 924-957 (removed by sortase); it reads GSENNNSNNGTLFGGLFAALGSLLLFGRRKKQNK.

Belongs to the serine-aspartate repeat-containing protein (SDr) family. In terms of assembly, homodimerizes; via N2-Domain. Interacts with host NRXN1; this interaction mediates bacterial attachment to host cells.

It localises to the secreted. It is found in the cell wall. Cell surface-associated calcium-binding protein which plays an important role in adhesion and pathogenesis. Mediates interactions with components of the extracellular matrix such as host NRXN1 to promote bacterial adhesion. This Staphylococcus aureus (strain MSSA476) protein is Serine-aspartate repeat-containing protein C (sdrC).